Consider the following 91-residue polypeptide: UPF0250 protein NMA1380 (91 aa).

Belongs to the UPF0250 family.

This Neisseria meningitidis serogroup A / serotype 4A (strain DSM 15465 / Z2491) protein is UPF0250 protein NMA1380.